A 248-amino-acid polypeptide reads, in one-letter code: Ribosomal RNA small subunit methyltransferase A (248 aa).

S-adenosyl-L-methionine contacts are provided by His11, Leu13, Gly38, Glu60, Asp83, and Asn101.

Belongs to the class I-like SAM-binding methyltransferase superfamily. rRNA adenine N(6)-methyltransferase family. RsmA subfamily.

It is found in the cytoplasm. The enzyme catalyses adenosine(1518)/adenosine(1519) in 16S rRNA + 4 S-adenosyl-L-methionine = N(6)-dimethyladenosine(1518)/N(6)-dimethyladenosine(1519) in 16S rRNA + 4 S-adenosyl-L-homocysteine + 4 H(+). Specifically dimethylates two adjacent adenosines (A1518 and A1519) in the loop of a conserved hairpin near the 3'-end of 16S rRNA in the 30S particle. May play a critical role in biogenesis of 30S subunits. In Aquifex aeolicus (strain VF5), this protein is Ribosomal RNA small subunit methyltransferase A.